We begin with the raw amino-acid sequence, 317 residues long: Melanocyte-stimulating hormone receptor (317 aa).

Topologically, residues 1-37 (MSVQGPQRRLLGSLNSTSPAAPRLGLAANQTGPRCLE) are extracellular. Asn15 and Asn29 each carry an N-linked (GlcNAc...) asparagine glycan. Residues 38–63 (VSVPDGLFLSLGLVSVVENVLVVAAI) form a helical membrane-spanning segment. The Cytoplasmic portion of the chain corresponds to 64-72 (AKNRNLHSP). Residues 73–93 (MYYFICCLAVSDLLVSVSSVL) traverse the membrane as a helical segment. Residues 94–118 (ETAVMLLLEAGTLAGRAAVVQQLDD) lie on the Extracellular side of the membrane. A helical membrane pass occupies residues 119-140 (VIDVLVCGAMVSSLCFLGAIAV). The Cytoplasmic segment spans residues 141 to 163 (DRYISIFYALRYHSIVTLPRAWR). A helical transmembrane segment spans residues 164-183 (AISAIWVASVLSSTLFIAYY). The Extracellular portion of the chain corresponds to 184–191 (DHTAVLLC). The chain crosses the membrane as a helical span at residues 192–211 (LVSFFVAMLVLMAVLYVHML). At 212-240 (ARACQHARGIARLHKRQRPVHQGLGLKGA) the chain is on the cytoplasmic side. A helical transmembrane segment spans residues 241 to 266 (ATLTILLGIFFLCWGPFFLHLSLMVL). Over 267–279 (CPRHPICGCVFKN) the chain is Extracellular. A helical membrane pass occupies residues 280-300 (FNLFLTLIICNSIVDPLIYAF). At 301 to 317 (RSQELRKTLQEVLLCSW) the chain is on the cytoplasmic side. Residue Cys315 is the site of S-palmitoyl cysteine attachment.

This sequence belongs to the G-protein coupled receptor 1 family. In terms of assembly, interacts with MGRN1, but does not undergo MGRN1-mediated ubiquitination; this interaction competes with GNAS-binding and thus inhibits agonist-induced cAMP production. Interacts with OPN3; the interaction results in a decrease in MC1R-mediated cAMP signaling and ultimately a decrease in melanin production in melanocytes.

The protein localises to the cell membrane. Functionally, receptor for MSH (alpha, beta and gamma) and ACTH. The activity of this receptor is mediated by G proteins which activate adenylate cyclase. Mediates melanogenesis, the production of eumelanin (black/brown) and phaeomelanin (red/yellow), via regulation of cAMP signaling in melanocytes. In Panthera onca (Jaguar), this protein is Melanocyte-stimulating hormone receptor (MC1R).